The chain runs to 684 residues: Hydroxyproline O-galactosyltransferase GALT2 (684 aa).

The Cytoplasmic portion of the chain corresponds to 1-22 (MKRVKSESFRGVYSSRRFKLSH). The chain crosses the membrane as a helical; Signal-anchor for type II membrane protein span at residues 23–43 (FLLAIAGFYLVFLAFKFPHFI). Over 44 to 684 (EMVAMLSGDT…KGRPQCCNFR (641 aa)) the chain is Lumenal. Positions 80-102 (KLEDEDHQSGPSTTQKVSPEEKI) are disordered. Asparagine 103, asparagine 127, and asparagine 162 each carry an N-linked (GlcNAc...) asparagine glycan. The region spanning 191 to 405 (RIMLLPCGLA…DVDIHSIHAT (215 aa)) is the Galectin domain. Residues asparagine 524 and asparagine 632 are each glycosylated (N-linked (GlcNAc...) asparagine).

This sequence belongs to the glycosyltransferase 31 family. The cofactor is Mn(2+). In terms of tissue distribution, expressed in stems and at lower levels in cauline leaves and siliques.

The protein localises to the golgi apparatus membrane. It functions in the pathway protein modification; protein glycosylation. Functionally, possesses hydroxyproline O-galactosyltransferase activity. Transfers galactose from UDP-galactose to hydroxyproline residues in the arabinogalactan proteins (AGPs). Is specific for AGPs containing non-contiguous peptidyl hydroxyproline residues. Utilizes UDP-galactose solely as sugar donor. The addition of galactose onto the peptidyl hydroxyproline residues in AGP core proteins represents the first committed step in arabinogalactan polysaccharide addition. AGP glycans play essential roles in both vegetative and reproductive plant growth. The polypeptide is Hydroxyproline O-galactosyltransferase GALT2 (Arabidopsis thaliana (Mouse-ear cress)).